A 327-amino-acid polypeptide reads, in one-letter code: Aspartate--ammonia ligase (327 aa).

Belongs to the class-II aminoacyl-tRNA synthetase family. AsnA subfamily.

It is found in the cytoplasm. The catalysed reaction is L-aspartate + NH4(+) + ATP = L-asparagine + AMP + diphosphate + H(+). It participates in amino-acid biosynthesis; L-asparagine biosynthesis; L-asparagine from L-aspartate (ammonia route): step 1/1. This chain is Aspartate--ammonia ligase, found in Fusobacterium nucleatum subsp. nucleatum (strain ATCC 25586 / DSM 15643 / BCRC 10681 / CIP 101130 / JCM 8532 / KCTC 2640 / LMG 13131 / VPI 4355).